The chain runs to 226 residues: Putative type II restriction enzyme MjaVIP (226 aa).

This sequence belongs to the BsaWI type II restriction endonuclease family.

The catalysed reaction is Endonucleolytic cleavage of DNA to give specific double-stranded fragments with terminal 5'-phosphates.. A P subtype restriction enzyme that recognizes the double-stranded sequence 5'-CCGG-3'; the cleavage site is unknown. This is Putative type II restriction enzyme MjaVIP (mjaVIRP) from Methanocaldococcus jannaschii (strain ATCC 43067 / DSM 2661 / JAL-1 / JCM 10045 / NBRC 100440) (Methanococcus jannaschii).